The following is a 379-amino-acid chain: Na(+)/H(+) antiporter NhaA (379 aa).

Helical transmembrane passes span 14 to 34, 59 to 79, 95 to 115, 125 to 145, 154 to 174, 175 to 195, 200 to 220, 221 to 241, 261 to 281, 292 to 312, 328 to 348, and 359 to 379; these read AGGI…NTPL, LLMW…GMEV, VFPA…FLVF, GWAI…ALLG, IFLL…IALF, FSHD…AILI, LKIT…ASVL, KSGV…PLNG, FAIL…GMGM, IALG…FVAV, IFAV…LAGL, and VTAL…VLGY.

This sequence belongs to the NhaA Na(+)/H(+) (TC 2.A.33) antiporter family.

The protein localises to the cell inner membrane. The enzyme catalyses Na(+)(in) + 2 H(+)(out) = Na(+)(out) + 2 H(+)(in). Functionally, na(+)/H(+) antiporter that extrudes sodium in exchange for external protons. The protein is Na(+)/H(+) antiporter NhaA of Pasteurella multocida (strain Pm70).